The following is a 384-amino-acid chain: Guanine nucleotide-binding protein alpha-1 subunit (384 aa).

The tract at residues M1–T22 is disordered. Residue G2 is the site of N-myristoyl glycine attachment. C5 carries S-palmitoyl cysteine lipidation. Residues H38–L384 enclose the G-alpha domain. The segment at K41 to T54 is G1 motif. Residues D49, S50, G51, K52, S53, T54, D163, L188, T194, G222, N288, K289, D291, and A356 each coordinate GTP. Residue S53 participates in Mg(2+) binding. The G2 motif stretch occupies residues D186 to T194. T194 is a Mg(2+) binding site. The segment at Y215–R224 is G3 motif. The G4 motif stretch occupies residues M284–D291. Residues T354–Q359 are G5 motif.

Belongs to the G-alpha family. G proteins are composed of 3 units; alpha, beta and gamma. The alpha chain contains the guanine nucleotide binding site. Requires Mg(2+) as cofactor.

Functionally, guanine nucleotide-binding proteins (G proteins) are involved as modulators or transducers in various transmembrane signaling systems. The sequence is that of Guanine nucleotide-binding protein alpha-1 subunit (GPA1) from Solanum tuberosum (Potato).